Here is a 673-residue protein sequence, read N- to C-terminus: Armadillo repeat-containing protein 8 (673 aa).

ARM repeat units lie at residues 51 to 92 (NKQK…SLSM), 95 to 134 (ENNIKSLVDCHIIPALLQGLLCSDLIFIEACLRCLRTVFI), 138 to 176 (TPVQLLYTDPTVIPHLMSLLSRSQHTQEYITQIFAHCCK), 178 to 217 (PEHQTVLFNHGAIQNIAPLLISPSYKVRMQALKCFSVLAY), 225 to 265 (TLVN…YMCR), 269 to 309 (IRTE…YLME), 313 to 352 (ELQRIASVTDHLVSMLADYFKYPSSVSAITDIKRLDHDLK), 374 to 413 (DIRKKITETENMMDRIVSGLSESSIKVRLAAVRCLHSLSR), 416 to 455 (QQLRTSFHDHAVWKPLMKLLQNAPDEVLVMASSTLCNLLL), 458 to 497 (SPSKEPILESGVIELLCSLTQSDSSALRVNGIWALMNMAF), 501 to 540 (QKVKVEIVRALGTEQLFRLLSDPDTNVLMKTLGLLRNLLS), 543 to 585 (PHID…NIAD), 588 to 627 (TAKELIMTDDDMLQKIKYYMGHSNVKLQLAATFCISNLIW), and 634 to 673 (QERQDKLREMGFVDILHKLTQASDPDLCDRAKTAMQQYLA).

Identified in the CTLH complex that contains at least MAEA, RMND5A (or alternatively its paralog RMND5B), GID8, WDR26, and RANBP9 and/or RANBP10; ARMC8 has an ancillary role in the complex.

Its subcellular location is the nucleus. It localises to the cytoplasm. Functionally, component of the CTLH E3 ubiquitin-protein ligase complex that mediates ubiquitination and subsequent proteasomal degradation of target proteins. This Danio rerio (Zebrafish) protein is Armadillo repeat-containing protein 8 (armc8).